The primary structure comprises 218 residues: Imidazole glycerol phosphate synthase subunit HisH (218 aa).

The 209-residue stretch at 5-213 (RLAVIDYEAG…VEFVARCSPL (209 aa)) folds into the Glutamine amidotransferase type-1 domain. The Nucleophile role is filled by cysteine 83. Residues histidine 188 and glutamate 190 contribute to the active site.

As to quaternary structure, heterodimer of HisH and HisF.

Its subcellular location is the cytoplasm. The enzyme catalyses 5-[(5-phospho-1-deoxy-D-ribulos-1-ylimino)methylamino]-1-(5-phospho-beta-D-ribosyl)imidazole-4-carboxamide + L-glutamine = D-erythro-1-(imidazol-4-yl)glycerol 3-phosphate + 5-amino-1-(5-phospho-beta-D-ribosyl)imidazole-4-carboxamide + L-glutamate + H(+). It catalyses the reaction L-glutamine + H2O = L-glutamate + NH4(+). Its pathway is amino-acid biosynthesis; L-histidine biosynthesis; L-histidine from 5-phospho-alpha-D-ribose 1-diphosphate: step 5/9. IGPS catalyzes the conversion of PRFAR and glutamine to IGP, AICAR and glutamate. The HisH subunit catalyzes the hydrolysis of glutamine to glutamate and ammonia as part of the synthesis of IGP and AICAR. The resulting ammonia molecule is channeled to the active site of HisF. This Synechococcus sp. (strain JA-2-3B'a(2-13)) (Cyanobacteria bacterium Yellowstone B-Prime) protein is Imidazole glycerol phosphate synthase subunit HisH.